We begin with the raw amino-acid sequence, 329 residues long: Beta-ketoacyl-[acyl-carrier-protein] synthase III (329 aa).

Catalysis depends on residues Cys-123 and His-256. The interval 257–261 (QANIR) is ACP-binding. Residue Asn-286 is part of the active site.

It belongs to the thiolase-like superfamily. FabH family. In terms of assembly, homodimer.

It is found in the cytoplasm. It catalyses the reaction malonyl-[ACP] + acetyl-CoA + H(+) = 3-oxobutanoyl-[ACP] + CO2 + CoA. It participates in lipid metabolism; fatty acid biosynthesis. Its function is as follows. Catalyzes the condensation reaction of fatty acid synthesis by the addition to an acyl acceptor of two carbons from malonyl-ACP. Catalyzes the first condensation reaction which initiates fatty acid synthesis and may therefore play a role in governing the total rate of fatty acid production. Possesses both acetoacetyl-ACP synthase and acetyl transacylase activities. Its substrate specificity determines the biosynthesis of branched-chain and/or straight-chain of fatty acids. This is Beta-ketoacyl-[acyl-carrier-protein] synthase III from Burkholderia pseudomallei (strain 1710b).